Here is a 123-residue protein sequence, read N- to C-terminus: Protein Wnt-7(I) (123 aa).

The O-palmitoleoyl serine; by PORCN moiety is linked to residue S1. C89 and C104 form a disulfide bridge. N90 carries an N-linked (GlcNAc...) asparagine glycan. A Microbody targeting signal motif is present at residues 121 to 123; it reads CKF.

The protein belongs to the Wnt family. Palmitoleoylation is required for efficient binding to frizzled receptors. Depalmitoleoylation leads to Wnt signaling pathway inhibition.

The protein resides in the secreted. The protein localises to the extracellular space. It is found in the extracellular matrix. Ligand for members of the frizzled family of seven transmembrane receptors. Probable developmental protein. May be a signaling molecule which affects the development of discrete regions of tissues. Is likely to signal over only few cell diameters. This Eptatretus stoutii (Pacific hagfish) protein is Protein Wnt-7(I) (WNT-7(I)).